A 624-amino-acid polypeptide reads, in one-letter code: Exocyst complex component EXO70B1 (624 aa).

The segment at 148–176 (FGLNPQGDAGAMNHRFDSEEEEDDDRDFN) is disordered.

Belongs to the EXO70 family. In terms of assembly, interacts with EXO70B2, SEC5A and EXO84B. Binds to PUB18. Binds directly to B1L at the plasma membrane and in small vesicles. Post-translationally, target of the E3 ubiquitin-protein ligase PUB18 that mediates its ubiquitination and degradation via the 26S proteasome.

Its subcellular location is the cytoplasmic vesicle. It localises to the phagosome. The protein resides in the endomembrane system. The protein localises to the cell membrane. It is found in the vesicle. Its function is as follows. Component of an exocyst subcomplex specifically involved in autophagy-related, Golgi-independent membrane traffic to the vacuole. Regulates autophagosome formation and autophagy-related Golgi-independent import into the vacuole. Positive regulator of both abscisic acid (ABA)-promoted and mannitol (drought)-promoted stomatal closure. Involved in the regulation of lateral root formation. This chain is Exocyst complex component EXO70B1, found in Arabidopsis thaliana (Mouse-ear cress).